A 461-amino-acid chain; its full sequence is Putative ankyrin repeat protein FPV218 (461 aa).

ANK repeat units follow at residues M1 to S28, K31 to N61, E65 to L94, P96 to V116, E120 to V149, K153 to I182, L186 to I213, N217 to N248, C250 to I277, C281 to E312, N358 to Y385, and L431 to K460.

The chain is Putative ankyrin repeat protein FPV218 from Fowlpox virus (strain NVSL) (FPV).